The sequence spans 613 residues: Thymidine kinase (613 aa).

Disordered regions lie at residues 1 to 233 (MAEG…GVKS) and 253 to 276 (SDGE…ATPR). The span at 8–18 (FSSSSTSSEEA) shows a compositional bias: low complexity. A compositionally biased stretch (basic and acidic residues) spans 78 to 88 (PKNEPRPERGK). Basic residues predominate over residues 114–126 (LGSRTRSKSRSRD). Positions 199-218 (HRYDKPSYDEEVCQKKDKGG) are enriched in basic and acidic residues. Residue 301-308 (GSMGVGKT) coordinates ATP. Catalysis depends on glutamate 327, which acts as the Proton acceptor. Substrate contacts are provided by tyrosine 344, glutamine 365, and arginine 461.

The protein belongs to the herpesviridae thymidine kinase family. Homodimer.

It catalyses the reaction thymidine + ATP = dTMP + ADP + H(+). In terms of biological role, catalyzes the transfer of the gamma-phospho group of ATP to thymidine to generate dTMP in the salvage pathway of pyrimidine synthesis. The dTMP serves as a substrate for DNA polymerase during viral DNA replication. Allows the virus to be reactivated and to grow in non-proliferative cells lacking a high concentration of phosphorylated nucleic acid precursors. The sequence is that of Thymidine kinase from Equine herpesvirus 2 (strain 86/87) (EHV-2).